We begin with the raw amino-acid sequence, 1313 residues long: Ataxin-2 (1313 aa).

A compositionally biased stretch (low complexity) spans 1-12 (MRSAAAAPRSPA). The tract at residues 1–255 (MRSAAAAPRS…RNSNKGLPQS (255 aa)) is disordered. Over residues 48–65 (GPYPSAAPPPPGPGPPPS) the composition is skewed to pro residues. Low complexity-rich tracts occupy residues 104-114 (FVVLLLPLASP), 141-154 (ARPAPGCPRPACEP), 166-187 (QQQQQQQQQQQQQQQQQQQQQQ), and 204-234 (LLASPAAAPSPSSSSVSSSSATAPSSVVAAT). The span at 235-244 (SGGGRPGLGR) shows a compositional bias: gly residues. Residue serine 248 is modified to Phosphoserine. The 78-residue stretch at 267-344 (RMVHILTSVV…FVVVQFKDMD (78 aa)) folds into the Sm domain. Residues serine 393, serine 466, serine 478, serine 508, and serine 554 each carry the phosphoserine modification. 2 stretches are compositionally biased toward basic and acidic residues: residues 459-471 (ALENDDRSEEEKY) and 478-492 (SSEREGHSINTRENK). Disordered regions lie at residues 459 to 954 (ALEN…HQQP) and 1137 to 1219 (NATL…NSFP). Polar residues predominate over residues 508-544 (SGRQNSPRMGQPGSGSMPSRSTSHTSDFNPNSGSDQR). Pro residues predominate over residues 552 to 562 (WPSPCPSPSSR). Low complexity predominate over residues 563-581 (PPSRYQSGPNSLPPRAATP). The span at 582 to 598 (TRPPSRPPSRPSRPPSH) shows a compositional bias: pro residues. At serine 624 the chain carries Phosphoserine. Residues 627–637 (AQRHPRNHRVS) show a composition bias toward basic residues. Arginine 640 is subject to Asymmetric dimethylarginine; alternate. Arginine 640 bears the Omega-N-methylarginine; alternate mark. A Phosphoserine modification is found at serine 642. The span at 666–681 (TSPSGGTWSSVVSGVP) shows a compositional bias: low complexity. Serine 684 is subject to Phosphoserine. Over residues 693–703 (PRQNSIGNTPS) the composition is skewed to polar residues. The residue at position 728 (serine 728) is a Phosphoserine. The residue at position 741 (threonine 741) is a Phosphothreonine. Residues 768–777 (PNETSPSFSK) show a composition bias toward polar residues. Serine 772 and serine 784 each carry phosphoserine. A compositionally biased stretch (basic and acidic residues) spans 788–804 (SEHRKQIDDLKKFKNDF). The segment covering 807-820 (QPSSTSESMDQLLN) has biased composition (polar residues). The segment covering 821–844 (KNREGEKSRDLIKDKIEPSAKDSF) has biased composition (basic and acidic residues). A compositionally biased stretch (low complexity) spans 847 to 871 (NSSSNCTSGSSKPNSPSISPSILSN). 7 positions are modified to phosphoserine: serine 856, serine 857, serine 861, serine 865, serine 867, serine 888, and serine 889. Residues 880 to 891 (VTSQGVQTSSPA) show a composition bias toward polar residues. Lysine 893 is covalently cross-linked (Glycyl lysine isopeptide (Lys-Gly) (interchain with G-Cter in SUMO2)). The span at 893-910 (KQEKDDKEEKKDAAEQVR) shows a compositional bias: basic and acidic residues. 2 stretches are compositionally biased toward low complexity: residues 925–936 (SFSQPKPSTTPT) and 1155–1192 (GQQQSQHGGSHPAPSPVQHHQHQAAQALHLASPQQQSA). A compositionally biased stretch (polar residues) spans 1206 to 1219 (TPASNTQSPQNSFP).

Belongs to the ataxin-2 family. Monomer. Can also form homodimers. Interacts with TARDBP; the interaction is RNA-dependent. Interacts with RBFOX1. Interacts with polyribosomes. Interacts with SH3GL2 and SH3GL3. Interacts with SH3KBP1 and CBL. Interacts with EGFR. Interacts with ATXN2L. As to expression, expressed in the brain, heart, liver, skeletal muscle, pancreas and placenta. Isoform 1 is predominant in the brain and spinal cord. Isoform 4 is more abundant in the cerebellum. In the brain, broadly expressed in the amygdala, caudate nucleus, corpus callosum, hippocampus, hypothalamus, substantia nigra, subthalamic nucleus and thalamus.

It localises to the cytoplasm. Functionally, involved in EGFR trafficking, acting as negative regulator of endocytic EGFR internalization at the plasma membrane. The sequence is that of Ataxin-2 (ATXN2) from Homo sapiens (Human).